A 353-amino-acid chain; its full sequence is S-adenosylmethionine:tRNA ribosyltransferase-isomerase (353 aa).

This sequence belongs to the QueA family. As to quaternary structure, monomer.

It localises to the cytoplasm. It catalyses the reaction 7-aminomethyl-7-carbaguanosine(34) in tRNA + S-adenosyl-L-methionine = epoxyqueuosine(34) in tRNA + adenine + L-methionine + 2 H(+). It functions in the pathway tRNA modification; tRNA-queuosine biosynthesis. In terms of biological role, transfers and isomerizes the ribose moiety from AdoMet to the 7-aminomethyl group of 7-deazaguanine (preQ1-tRNA) to give epoxyqueuosine (oQ-tRNA). This is S-adenosylmethionine:tRNA ribosyltransferase-isomerase from Maricaulis maris (strain MCS10) (Caulobacter maris).